The primary structure comprises 66 residues: Large ribosomal subunit protein bL33c (66 aa).

The protein belongs to the bacterial ribosomal protein bL33 family.

It localises to the plastid. The protein localises to the chloroplast. This Daucus carota (Wild carrot) protein is Large ribosomal subunit protein bL33c.